Consider the following 165-residue polypeptide: Large ribosomal subunit protein uL11 (165 aa).

It belongs to the universal ribosomal protein uL11 family. In terms of assembly, component of the large ribosomal subunit. Mature ribosomes consist of a small (40S) and a large (60S) subunit. The 40S subunit contains about 32 different proteins and 1 molecule of RNA (18S). The 60S subunit contains 45 different proteins and 3 molecules of RNA (25S, 5.8S and 5S).

The protein localises to the cytoplasm. Component of the ribosome, a large ribonucleoprotein complex responsible for the synthesis of proteins in the cell. The small ribosomal subunit (SSU) binds messenger RNAs (mRNAs) and translates the encoded message by selecting cognate aminoacyl-transfer RNA (tRNA) molecules. The large subunit (LSU) contains the ribosomal catalytic site termed the peptidyl transferase center (PTC), which catalyzes the formation of peptide bonds, thereby polymerizing the amino acids delivered by tRNAs into a polypeptide chain. The nascent polypeptides leave the ribosome through a tunnel in the LSU and interact with protein factors that function in enzymatic processing, targeting, and the membrane insertion of nascent chains at the exit of the ribosomal tunnel. The polypeptide is Large ribosomal subunit protein uL11 (RPL12) (Candida albicans (strain SC5314 / ATCC MYA-2876) (Yeast)).